Consider the following 2095-residue polypeptide: Oxygen-regulated protein 1 (2095 aa).

Doublecortin domains follow at residues 35–117 (KRIS…VDLD) and 157–236 (RRLV…GNYD). 5 disordered regions span residues 358–379 (GLSN…DYGP), 643–688 (ENRK…GKIP), 863–887 (GAEV…PDFP), 1400–1430 (NKKK…SSER), and 1572–1595 (SGYP…EPTR). The segment covering 1405–1419 (ISSDKEESRTSEEPR) has biased composition (basic and acidic residues). The segment covering 1420–1430 (SITNSMTSSER) has biased composition (polar residues). Residues 1583–1595 (HNDDSGQEKEPTR) are compositionally biased toward basic and acidic residues.

As to quaternary structure, interacts (via the doublecortin domains) with microtubules. Interacts with RP1L1. Interacts with MAK. Expressed in the cell bodies and inner segments of photoreceptors. Not found in liver, spleen, kidney, brain, thymus, muscle, heart, lung and testis.

The protein localises to the cytoplasm. It is found in the cytoskeleton. The protein resides in the cilium axoneme. It localises to the cell projection. Its subcellular location is the cilium. The protein localises to the photoreceptor outer segment. Its function is as follows. Microtubule-associated protein regulating the stability and length of the microtubule-based axoneme of photoreceptors. Required for the differentiation of photoreceptor cells, it plays a role in the organization of the outer segment of rod and cone photoreceptors ensuring the correct orientation and higher-order stacking of outer segment disks along the photoreceptor axoneme. The sequence is that of Oxygen-regulated protein 1 (Rp1) from Mus musculus (Mouse).